The sequence spans 242 residues: Protein Thf1 (242 aa).

A coiled-coil region spans residues 178–209 (SSDKLQKDLDLYRSNLDKMQQLLTVIEDTLEA). Residues 212-242 (KKRASQKLEKKPEVVEEKEHKENEEQQQSSN) are disordered. Residues 217–235 (QKLEKKPEVVEEKEHKENE) are compositionally biased toward basic and acidic residues.

This sequence belongs to the THF1 family.

In terms of biological role, may be involved in photosynthetic membrane biogenesis. The chain is Protein Thf1 from Crocosphaera subtropica (strain ATCC 51142 / BH68) (Cyanothece sp. (strain ATCC 51142)).